Here is a 328-residue protein sequence, read N- to C-terminus: Thiamine-monophosphate kinase (328 aa).

The Mg(2+) site is built by Asp-30, Thr-45, Thr-46, and Asp-47. Residue His-54 coordinates substrate. The Mg(2+) site is built by Asp-75 and Asp-122. Residues 121-122 (GD) and Arg-146 contribute to the ATP site. Asp-211 contributes to the Mg(2+) binding site. Residue Ser-213 participates in ATP binding. Residue Asp-214 coordinates Mg(2+). Residues Glu-262 and Phe-321 each coordinate substrate.

Belongs to the thiamine-monophosphate kinase family.

The catalysed reaction is thiamine phosphate + ATP = thiamine diphosphate + ADP. It participates in cofactor biosynthesis; thiamine diphosphate biosynthesis; thiamine diphosphate from thiamine phosphate: step 1/1. In terms of biological role, catalyzes the ATP-dependent phosphorylation of thiamine-monophosphate (TMP) to form thiamine-pyrophosphate (TPP), the active form of vitamin B1. The chain is Thiamine-monophosphate kinase from Haemophilus influenzae (strain ATCC 51907 / DSM 11121 / KW20 / Rd).